We begin with the raw amino-acid sequence, 484 residues long: uncharacterized protein (484 aa).

The protein to M.thermoautotrophicum MTH1153.

This is an uncharacterized protein from Methanocaldococcus jannaschii (strain ATCC 43067 / DSM 2661 / JAL-1 / JCM 10045 / NBRC 100440) (Methanococcus jannaschii).